A 137-amino-acid polypeptide reads, in one-letter code: Large ribosomal subunit protein uL16 (137 aa).

The protein belongs to the universal ribosomal protein uL16 family. In terms of assembly, part of the 50S ribosomal subunit.

Its function is as follows. Binds 23S rRNA and is also seen to make contacts with the A and possibly P site tRNAs. The chain is Large ribosomal subunit protein uL16 from Streptococcus thermophilus (strain ATCC BAA-491 / LMD-9).